The sequence spans 296 residues: 4-diphosphocytidyl-2-C-methyl-D-erythritol kinase (296 aa).

The active site involves Lys-11. Position 95-105 (95-105 (PVAAGMAGGSS)) interacts with ATP. Residue Asp-137 is part of the active site.

The protein belongs to the GHMP kinase family. IspE subfamily.

The catalysed reaction is 4-CDP-2-C-methyl-D-erythritol + ATP = 4-CDP-2-C-methyl-D-erythritol 2-phosphate + ADP + H(+). It functions in the pathway isoprenoid biosynthesis; isopentenyl diphosphate biosynthesis via DXP pathway; isopentenyl diphosphate from 1-deoxy-D-xylulose 5-phosphate: step 3/6. Catalyzes the phosphorylation of the position 2 hydroxy group of 4-diphosphocytidyl-2C-methyl-D-erythritol. This is 4-diphosphocytidyl-2-C-methyl-D-erythritol kinase from Clostridioides difficile (strain 630) (Peptoclostridium difficile).